Consider the following 514-residue polypeptide: Probable peptidoglycan glycosyltransferase FtsW (514 aa).

9 consecutive transmembrane segments (helical) span residues 45 to 65 (IGLI…VTSA), 86 to 106 (IYIV…MQFW), 108 to 128 (TANP…LLVG), 137 to 157 (WLAL…FFFT), 182 to 202 (VVFF…TVVV), 218 to 238 (LWQF…LIVF), 301 to 321 (ILAE…ILWM), 347 to 367 (VGIW…GILP), and 373 to 393 (LPLV…VALL). 2 disordered regions span residues 411–437 (GDNK…RTKH) and 449–501 (DYNQ…AGIK).

The protein belongs to the SEDS family. FtsW subfamily.

It localises to the cell inner membrane. It carries out the reaction [GlcNAc-(1-&gt;4)-Mur2Ac(oyl-L-Ala-gamma-D-Glu-L-Lys-D-Ala-D-Ala)](n)-di-trans,octa-cis-undecaprenyl diphosphate + beta-D-GlcNAc-(1-&gt;4)-Mur2Ac(oyl-L-Ala-gamma-D-Glu-L-Lys-D-Ala-D-Ala)-di-trans,octa-cis-undecaprenyl diphosphate = [GlcNAc-(1-&gt;4)-Mur2Ac(oyl-L-Ala-gamma-D-Glu-L-Lys-D-Ala-D-Ala)](n+1)-di-trans,octa-cis-undecaprenyl diphosphate + di-trans,octa-cis-undecaprenyl diphosphate + H(+). The protein operates within cell wall biogenesis; peptidoglycan biosynthesis. Peptidoglycan polymerase that is essential for cell division. This chain is Probable peptidoglycan glycosyltransferase FtsW, found in Alteromonas naphthalenivorans.